The primary structure comprises 190 residues: Xanthine phosphoribosyltransferase (190 aa).

Residues leucine 20 and asparagine 27 each contribute to the xanthine site. A 5-phospho-alpha-D-ribose 1-diphosphate-binding site is contributed by 127–131; it reads AYGNA. Lysine 155 contacts xanthine.

Belongs to the purine/pyrimidine phosphoribosyltransferase family. Xpt subfamily. In terms of assembly, homodimer.

It localises to the cytoplasm. It catalyses the reaction XMP + diphosphate = xanthine + 5-phospho-alpha-D-ribose 1-diphosphate. The protein operates within purine metabolism; XMP biosynthesis via salvage pathway; XMP from xanthine: step 1/1. In terms of biological role, converts the preformed base xanthine, a product of nucleic acid breakdown, to xanthosine 5'-monophosphate (XMP), so it can be reused for RNA or DNA synthesis. In Bacteroides thetaiotaomicron (strain ATCC 29148 / DSM 2079 / JCM 5827 / CCUG 10774 / NCTC 10582 / VPI-5482 / E50), this protein is Xanthine phosphoribosyltransferase.